The chain runs to 73 residues: Translation initiation factor IF-1 (73 aa).

An S1-like domain is found at 1–72 (MAKDDVIEVE…TKGRITYRFI (72 aa)).

Belongs to the IF-1 family. As to quaternary structure, component of the 30S ribosomal translation pre-initiation complex which assembles on the 30S ribosome in the order IF-2 and IF-3, IF-1 and N-formylmethionyl-tRNA(fMet); mRNA recruitment can occur at any time during PIC assembly.

The protein resides in the cytoplasm. One of the essential components for the initiation of protein synthesis. Stabilizes the binding of IF-2 and IF-3 on the 30S subunit to which N-formylmethionyl-tRNA(fMet) subsequently binds. Helps modulate mRNA selection, yielding the 30S pre-initiation complex (PIC). Upon addition of the 50S ribosomal subunit IF-1, IF-2 and IF-3 are released leaving the mature 70S translation initiation complex. In Lactobacillus acidophilus (strain ATCC 700396 / NCK56 / N2 / NCFM), this protein is Translation initiation factor IF-1.